We begin with the raw amino-acid sequence, 328 residues long: POU domain, class 5, transcription factor 2 (328 aa).

The disordered stretch occupies residues 1–25; that stretch reads MAGHRPSNHFCPLPGSGGGGPRGPM. A POU-specific domain is found at 118-192; it reads DISGILKELQ…LLKKWLKEVE (75 aa). A DNA-binding region (homeobox) is located at residues 210-269; it reads GKWRRASRERRIGNSLEKFFQRCPKPTPQQISHIAGCLQLQKDVVRVWFYNRSKMGSRPT.

It belongs to the POU transcription factor family. Class-5 subfamily. In terms of tissue distribution, expressed in skeletal and cardiac muscles, brain, heart and lung. Little or no detectable expression found in pancreas, kidney, liver or placenta.

The protein resides in the nucleus. Its function is as follows. Transcription factor that binds preferentially to the octamer motif (5'-ATGTTAAT-3'). May exert a regulatory function in meiotic events that are required for terminal differentiation of male germ cell. The sequence is that of POU domain, class 5, transcription factor 2 (POU5F2) from Homo sapiens (Human).